A 702-amino-acid polypeptide reads, in one-letter code: Polyphosphate kinase (702 aa).

Asparagine 55 lines the ATP pocket. Residues arginine 389 and arginine 419 each contribute to the Mg(2+) site. Histidine 449 (phosphohistidine intermediate) is an active-site residue. Positions 482, 578, and 606 each coordinate ATP.

It belongs to the polyphosphate kinase 1 (PPK1) family. Requires Mg(2+) as cofactor. Post-translationally, an intermediate of this reaction is the autophosphorylated ppk in which a phosphate is covalently linked to a histidine residue through a N-P bond.

The catalysed reaction is [phosphate](n) + ATP = [phosphate](n+1) + ADP. In terms of biological role, catalyzes the reversible transfer of the terminal phosphate of ATP to form a long-chain polyphosphate (polyP). This chain is Polyphosphate kinase, found in Bacillus cereus (strain ATCC 14579 / DSM 31 / CCUG 7414 / JCM 2152 / NBRC 15305 / NCIMB 9373 / NCTC 2599 / NRRL B-3711).